The following is a 294-amino-acid chain: 4-hydroxy-tetrahydrodipicolinate synthase (294 aa).

Thr-45 contacts pyruvate. Tyr-133 functions as the Proton donor/acceptor in the catalytic mechanism. Lys-161 serves as the catalytic Schiff-base intermediate with substrate. Ile-203 is a pyruvate binding site.

It belongs to the DapA family. As to quaternary structure, homotetramer; dimer of dimers.

It is found in the cytoplasm. The catalysed reaction is L-aspartate 4-semialdehyde + pyruvate = (2S,4S)-4-hydroxy-2,3,4,5-tetrahydrodipicolinate + H2O + H(+). The protein operates within amino-acid biosynthesis; L-lysine biosynthesis via DAP pathway; (S)-tetrahydrodipicolinate from L-aspartate: step 3/4. Its function is as follows. Catalyzes the condensation of (S)-aspartate-beta-semialdehyde [(S)-ASA] and pyruvate to 4-hydroxy-tetrahydrodipicolinate (HTPA). The sequence is that of 4-hydroxy-tetrahydrodipicolinate synthase from Buchnera aphidicola subsp. Acyrthosiphon pisum (strain 5A).